The sequence spans 395 residues: Flap endonuclease 1 (395 aa).

An N-domain region spans residues 1 to 104; that stretch reads MGIKHLYQLI…GELAKRFQRK (104 aa). Asp-34 lines the Mg(2+) pocket. The DNA site is built by Arg-47 and Arg-70. Mg(2+)-binding residues include Asp-86, Glu-158, Glu-160, Asp-179, and Asp-181. The I-domain stretch occupies residues 122–253; the sequence is DVEKFSRRTV…STALKLIREH (132 aa). Glu-158 provides a ligand contact to DNA. DNA contacts are provided by Gly-231 and Asp-233. Residue Asp-233 coordinates Mg(2+). The tract at residues 341–349 is interaction with PCNA; it reads QQSRLEGFF. Positions 359 to 395 are disordered; that stretch reads KATLKRKADEKLEEKKKKQKVDAKAKKQAKAKPRTAG. Residues 364-383 show a composition bias toward basic and acidic residues; the sequence is RKADEKLEEKKKKQKVDAKA. Positions 384 to 395 are enriched in basic residues; that stretch reads KKQAKAKPRTAG.

This sequence belongs to the XPG/RAD2 endonuclease family. FEN1 subfamily. As to quaternary structure, interacts with PCNA. Three molecules of fen1 bind to one PCNA trimer with each molecule binding to one PCNA monomer. PCNA stimulates the nuclease activity without altering cleavage specificity. The cofactor is Mg(2+). Phosphorylated. Phosphorylation upon DNA damage induces relocalization to the nuclear plasma.

It localises to the nucleus. The protein localises to the nucleolus. Its subcellular location is the nucleoplasm. The protein resides in the mitochondrion. Functionally, structure-specific nuclease with 5'-flap endonuclease and 5'-3' exonuclease activities involved in DNA replication and repair. During DNA replication, cleaves the 5'-overhanging flap structure that is generated by displacement synthesis when DNA polymerase encounters the 5'-end of a downstream Okazaki fragment. It enters the flap from the 5'-end and then tracks to cleave the flap base, leaving a nick for ligation. Also involved in the long patch base excision repair (LP-BER) pathway, by cleaving within the apurinic/apyrimidinic (AP) site-terminated flap. Acts as a genome stabilization factor that prevents flaps from equilibrating into structures that lead to duplications and deletions. Also possesses 5'-3' exonuclease activity on nicked or gapped double-stranded DNA, and exhibits RNase H activity. Also involved in replication and repair of rDNA and in repairing mitochondrial DNA. The chain is Flap endonuclease 1 (fen1) from Pyrenophora tritici-repentis (strain Pt-1C-BFP) (Wheat tan spot fungus).